Consider the following 858-residue polypeptide: Neurofilament medium polypeptide (858 aa).

Serine 2 bears the N-acetylserine mark. Residues 2–99 (SYTMEPLGNP…KLSRSNEKEQ (98 aa)) are head. The disordered stretch occupies residues 22-57 (ATYSRASASPSSGFRSQSWSRGSGSTVSSSYKRTNL). Over residues 30 to 54 (SPSSGFRSQSWSRGSGSTVSSSYKR) the composition is skewed to low complexity. Threonine 47 is a glycosylation site (O-linked (GlcNAc) threonine). The region spanning 96–407 (EKEQLQGLND…KLLEGEETRF (312 aa)) is the IF rod domain. The interval 100–131 (LQGLNDRFAGYIEKVHYLEQQNKEIEAELAAL) is coil 1A. The linker 1 stretch occupies residues 132–144 (RQKHAGRAQLGDA). Positions 145 to 243 (YEQELRELRG…EEEVAELLAQ (99 aa)) are coil 1B. The interval 244–260 (LQASHATVERKDYLKTD) is linker 12. Residues 261 to 282 (LTTALKEIRAQLECQSDHNMHQ) are coil 2A. Positions 283 to 286 (AEEW) are linker 2. The segment at 287–407 (FKCRYAKLTE…KLLEGEETRF (121 aa)) is coil 2B. A tail region spans residues 408 to 858 (SAFSGSITGP…SHAVVKEIKE (451 aa)). O-linked (GlcNAc) threonine glycosylation is present at threonine 427. The tract at residues 478–788 (AAKAQEEEQE…VVTNGLDVSP (311 aa)) is disordered. Acidic residues-rich tracts occupy residues 484–500 (EEQE…EEEA) and 509–524 (AAEE…EEEE). Basic and acidic residues predominate over residues 525-541 (AAKSDAAEEGGSKKEEI). The span at 542–555 (EEKEEGEEAEEEEA) shows a compositional bias: acidic residues. Positions 556–572 (EAKGKAEEAGAKVEKVK) are enriched in basic and acidic residues. Residues 576-586 (AKSPPKSPPKS) are compositionally biased toward pro residues. The segment covering 590 to 601 (EQAKAVQKAAAE) has biased composition (low complexity). A compositionally biased stretch (basic and acidic residues) spans 602 to 623 (VGKDQKAEKAAEKAAKEEKAAS). Low complexity predominate over residues 624 to 637 (PEKPATPKVTSPEK). Basic and acidic residues-rich tracts occupy residues 651–664 (ITPE…KPTT) and 675–727 (ASPE…KAVV). The segment covering 728-743 (EESITVTKVTKVTAEV) has biased composition (low complexity). Residues 744 to 771 (EVSKEARKEDIAVNGEVEEKKDEAKEKE) are compositionally biased toward basic and acidic residues.

This sequence belongs to the intermediate filament family. Post-translationally, there are a number of repeats of the tripeptide K-S-P, NFM is phosphorylated on a number of the serines in this motif. It is thought that phosphorylation of NFM results in the formation of interfilament cross bridges that are important in the maintenance of axonal caliber. Phosphorylation seems to play a major role in the functioning of the larger neurofilament polypeptides (NF-M and NF-H), the levels of phosphorylation being altered developmentally and coincident with a change in the neurofilament function.

It localises to the cytoplasm. The protein resides in the cytoskeleton. Its subcellular location is the cell projection. It is found in the axon. Neurofilaments usually contain three intermediate filament proteins: NEFL, NEFM, and NEFH which are involved in the maintenance of neuronal caliber. May additionally cooperate with other neuronal intermediate filament proteins to form neuronal filamentous networks. The chain is Neurofilament medium polypeptide (NEFM) from Gallus gallus (Chicken).